Reading from the N-terminus, the 169-residue chain is Endoribonuclease YbeY (169 aa).

3 residues coordinate Zn(2+): histidine 135, histidine 139, and histidine 145.

This sequence belongs to the endoribonuclease YbeY family. Zn(2+) is required as a cofactor.

The protein localises to the cytoplasm. Single strand-specific metallo-endoribonuclease involved in late-stage 70S ribosome quality control and in maturation of the 3' terminus of the 16S rRNA. The chain is Endoribonuclease YbeY from Lachnospira eligens (strain ATCC 27750 / DSM 3376 / VPI C15-48 / C15-B4) (Eubacterium eligens).